Reading from the N-terminus, the 91-residue chain is Putative pterin-4-alpha-carbinolamine dehydratase (91 aa).

The protein belongs to the pterin-4-alpha-carbinolamine dehydratase family.

It carries out the reaction (4aS,6R)-4a-hydroxy-L-erythro-5,6,7,8-tetrahydrobiopterin = (6R)-L-erythro-6,7-dihydrobiopterin + H2O. The polypeptide is Putative pterin-4-alpha-carbinolamine dehydratase (Sulfolobus acidocaldarius (strain ATCC 33909 / DSM 639 / JCM 8929 / NBRC 15157 / NCIMB 11770)).